Here is a 378-residue protein sequence, read N- to C-terminus: Anhydro-N-acetylmuramic acid kinase (378 aa).

9–16 lines the ATP pocket; sequence GTSADGID.

This sequence belongs to the anhydro-N-acetylmuramic acid kinase family.

The enzyme catalyses 1,6-anhydro-N-acetyl-beta-muramate + ATP + H2O = N-acetyl-D-muramate 6-phosphate + ADP + H(+). It functions in the pathway amino-sugar metabolism; 1,6-anhydro-N-acetylmuramate degradation. Its pathway is cell wall biogenesis; peptidoglycan recycling. Its function is as follows. Catalyzes the specific phosphorylation of 1,6-anhydro-N-acetylmuramic acid (anhMurNAc) with the simultaneous cleavage of the 1,6-anhydro ring, generating MurNAc-6-P. Is required for the utilization of anhMurNAc either imported from the medium or derived from its own cell wall murein, and thus plays a role in cell wall recycling. This chain is Anhydro-N-acetylmuramic acid kinase, found in Synechococcus elongatus (strain ATCC 33912 / PCC 7942 / FACHB-805) (Anacystis nidulans R2).